The primary structure comprises 83 residues: MGSSRLMITFIVVAMLAISSDLFSVQIGISVQAAPPTCGRDCTEKFLTQDCDKYCVGLSYKKGVCILSEGLPPKTSTYRCCCS.

Residues 1 to 22 (MGSSRLMITFIVVAMLAISSDL) form the signal peptide. Disulfide bonds link Cys38–Cys82, Cys42–Cys65, Cys51–Cys80, and Cys55–Cys81.

Belongs to the DEFL family.

The protein localises to the secreted. This Arabidopsis thaliana (Mouse-ear cress) protein is Putative defensin-like protein 66.